Consider the following 303-residue polypeptide: 4-hydroxy-3-methylbut-2-enyl diphosphate reductase (303 aa).

C12 contributes to the [4Fe-4S] cluster binding site. Residues H42 and H75 each coordinate (2E)-4-hydroxy-3-methylbut-2-enyl diphosphate. Dimethylallyl diphosphate-binding residues include H42 and H75. The isopentenyl diphosphate site is built by H42 and H75. [4Fe-4S] cluster is bound at residue C97. Residue H125 participates in (2E)-4-hydroxy-3-methylbut-2-enyl diphosphate binding. H125 contributes to the dimethylallyl diphosphate binding site. Isopentenyl diphosphate is bound at residue H125. Catalysis depends on E127, which acts as the Proton donor. Position 164 (S164) interacts with (2E)-4-hydroxy-3-methylbut-2-enyl diphosphate. C192 serves as a coordination point for [4Fe-4S] cluster. S220, S221, N222, and S264 together coordinate (2E)-4-hydroxy-3-methylbut-2-enyl diphosphate. Dimethylallyl diphosphate is bound by residues S220, S221, N222, and S264. Residues S220, S221, N222, and S264 each contribute to the isopentenyl diphosphate site.

It belongs to the IspH family. [4Fe-4S] cluster is required as a cofactor.

It carries out the reaction isopentenyl diphosphate + 2 oxidized [2Fe-2S]-[ferredoxin] + H2O = (2E)-4-hydroxy-3-methylbut-2-enyl diphosphate + 2 reduced [2Fe-2S]-[ferredoxin] + 2 H(+). The catalysed reaction is dimethylallyl diphosphate + 2 oxidized [2Fe-2S]-[ferredoxin] + H2O = (2E)-4-hydroxy-3-methylbut-2-enyl diphosphate + 2 reduced [2Fe-2S]-[ferredoxin] + 2 H(+). The protein operates within isoprenoid biosynthesis; dimethylallyl diphosphate biosynthesis; dimethylallyl diphosphate from (2E)-4-hydroxy-3-methylbutenyl diphosphate: step 1/1. It participates in isoprenoid biosynthesis; isopentenyl diphosphate biosynthesis via DXP pathway; isopentenyl diphosphate from 1-deoxy-D-xylulose 5-phosphate: step 6/6. Catalyzes the conversion of 1-hydroxy-2-methyl-2-(E)-butenyl 4-diphosphate (HMBPP) into a mixture of isopentenyl diphosphate (IPP) and dimethylallyl diphosphate (DMAPP). Acts in the terminal step of the DOXP/MEP pathway for isoprenoid precursor biosynthesis. The polypeptide is 4-hydroxy-3-methylbut-2-enyl diphosphate reductase (Neorickettsia sennetsu (strain ATCC VR-367 / Miyayama) (Ehrlichia sennetsu)).